Consider the following 351-residue polypeptide: Thiamine-phosphate synthase (351 aa).

The tract at residues 1-127 (MQNLAPASEG…SETAKALRYR (127 aa)) is unknown. Residues 64-84 (RAARQTDQDPGTALSHPQERD) form a disordered region. A thiamine-phosphate synthase region spans residues 128–351 (VYILEQALTL…LRRLSQGEPS (224 aa)). 4-amino-2-methyl-5-(diphosphooxymethyl)pyrimidine is bound by residues 178–182 (QYRDK) and Asn210. The Mg(2+) site is built by Asp211 and Asp230. Ser249 is a 4-amino-2-methyl-5-(diphosphooxymethyl)pyrimidine binding site. Position 275 to 277 (275 to 277 (TPT)) interacts with 2-[(2R,5Z)-2-carboxy-4-methylthiazol-5(2H)-ylidene]ethyl phosphate. Lys278 serves as a coordination point for 4-amino-2-methyl-5-(diphosphooxymethyl)pyrimidine. Gly305 contributes to the 2-[(2R,5Z)-2-carboxy-4-methylthiazol-5(2H)-ylidene]ethyl phosphate binding site.

The protein belongs to the thiamine-phosphate synthase family. Mg(2+) is required as a cofactor.

The catalysed reaction is 2-[(2R,5Z)-2-carboxy-4-methylthiazol-5(2H)-ylidene]ethyl phosphate + 4-amino-2-methyl-5-(diphosphooxymethyl)pyrimidine + 2 H(+) = thiamine phosphate + CO2 + diphosphate. The enzyme catalyses 2-(2-carboxy-4-methylthiazol-5-yl)ethyl phosphate + 4-amino-2-methyl-5-(diphosphooxymethyl)pyrimidine + 2 H(+) = thiamine phosphate + CO2 + diphosphate. It carries out the reaction 4-methyl-5-(2-phosphooxyethyl)-thiazole + 4-amino-2-methyl-5-(diphosphooxymethyl)pyrimidine + H(+) = thiamine phosphate + diphosphate. It functions in the pathway cofactor biosynthesis; thiamine diphosphate biosynthesis; thiamine phosphate from 4-amino-2-methyl-5-diphosphomethylpyrimidine and 4-methyl-5-(2-phosphoethyl)-thiazole: step 1/1. Its function is as follows. Condenses 4-methyl-5-(beta-hydroxyethyl)thiazole monophosphate (THZ-P) and 2-methyl-4-amino-5-hydroxymethyl pyrimidine pyrophosphate (HMP-PP) to form thiamine monophosphate (TMP). This chain is Thiamine-phosphate synthase, found in Thermosynechococcus vestitus (strain NIES-2133 / IAM M-273 / BP-1).